We begin with the raw amino-acid sequence, 249 residues long: Diaminopimelate epimerase (249 aa).

Residues asparagine 11 and asparagine 60 each coordinate substrate. Residue cysteine 69 is the Proton donor of the active site. Substrate-binding positions include glycine 70–asparagine 71, asparagine 164, and glutamate 182–arginine 183. Cysteine 192 acts as the Proton acceptor in catalysis. A substrate-binding site is contributed by glycine 193 to threonine 194.

This sequence belongs to the diaminopimelate epimerase family. Homodimer.

The protein localises to the cytoplasm. It catalyses the reaction (2S,6S)-2,6-diaminopimelate = meso-2,6-diaminopimelate. Its pathway is amino-acid biosynthesis; L-lysine biosynthesis via DAP pathway; DL-2,6-diaminopimelate from LL-2,6-diaminopimelate: step 1/1. Catalyzes the stereoinversion of LL-2,6-diaminopimelate (L,L-DAP) to meso-diaminopimelate (meso-DAP), a precursor of L-lysine and an essential component of the bacterial peptidoglycan. This chain is Diaminopimelate epimerase, found in Campylobacter jejuni subsp. doylei (strain ATCC BAA-1458 / RM4099 / 269.97).